Consider the following 555-residue polypeptide: Vacuolar fusion protein MON1 homolog A (555 aa).

Basic and acidic residues predominate over residues 1–12 (MAADMQRKRSSE). The disordered stretch occupies residues 1–90 (MAADMQRKRS…PPLATDMRQI (90 aa)). Ser-31 and Ser-56 each carry phosphoserine. Thr-61 bears the Phosphothreonine mark. Ser-91 carries the phosphoserine modification. The tract at residues 112–149 (MLPGSSEDWPESPGAARRPATEPPRDGAGEGDEEEAAE) is disordered. Positions 130-139 (PATEPPRDGA) are enriched in basic and acidic residues.

The protein belongs to the MON1/SAND family. As to quaternary structure, interacts with CCZ1. Found in a complex with RMC1, CCZ1, MON1A and MON1B. The MON1A-CCZ1B complex interacts with RIMOC1. The MON1A-CCZ1B complex interacts with RAB7A and this interaction is enhanced in the presence of RIMOC1.

In terms of biological role, plays an important role in membrane trafficking through the secretory apparatus. Not involved in endocytic trafficking to lysosomes. Acts in concert with CCZ1, as a guanine exchange factor (GEF) for RAB7, promotes the exchange of GDP to GTP, converting it from an inactive GDP-bound form into an active GTP-bound form. This is Vacuolar fusion protein MON1 homolog A (MON1A) from Bos taurus (Bovine).